The primary structure comprises 279 residues: Undecaprenyl-diphosphatase (279 aa).

8 helical membrane-spanning segments follow: residues 2–22 (LFIELLKAIFFGVIEGVTEWL), 44–64 (AFMEMFNIVIQLGAIIAVIVI), 85–105 (WQLWLKVAIACIPSIIIAVPL), 113–133 (FNHMLPIAIALIVYGIAFLWI), 163–183 (VLSIIPGTSRSGATILGAIIL), 188–208 (TVAADFTFFLAIPTMFGYSGL), 225–245 (LLVLLVASLTAFAVSLYVIKL), and 255–275 (FTVFGRYRIVLGSLLIVYSVF).

It belongs to the UppP family.

The protein localises to the cell membrane. The catalysed reaction is di-trans,octa-cis-undecaprenyl diphosphate + H2O = di-trans,octa-cis-undecaprenyl phosphate + phosphate + H(+). Its function is as follows. Catalyzes the dephosphorylation of undecaprenyl diphosphate (UPP). Confers resistance to bacitracin. The protein is Undecaprenyl-diphosphatase of Streptococcus equi subsp. zooepidemicus (strain MGCS10565).